The following is a 684-amino-acid chain: Glycine--tRNA ligase beta subunit (684 aa).

Belongs to the class-II aminoacyl-tRNA synthetase family. In terms of assembly, tetramer of two alpha and two beta subunits.

Its subcellular location is the cytoplasm. The enzyme catalyses tRNA(Gly) + glycine + ATP = glycyl-tRNA(Gly) + AMP + diphosphate. In Pseudomonas aeruginosa (strain LESB58), this protein is Glycine--tRNA ligase beta subunit.